We begin with the raw amino-acid sequence, 407 residues long: Enolase-binding protein (407 aa).

An N-terminal signal peptide occupies residues M1 to S24. Residues S25 to N366 are Extracellular-facing. Residues N52, N78, N161, and N250 are each glycosylated (N-linked (GlcNAc...) asparagine). Residues V367–I387 form a helical membrane-spanning segment. The Cytoplasmic portion of the chain corresponds to R388 to T407.

In terms of assembly, (Microbial infection) Interacts with ENO/enolase from parasites P.berghei and P.falciparum. As to expression, expressed in the female midgut epithelium.

It is found in the cell membrane. (Microbial infection) Acts as a receptor for ENO/enolase from parasites P.berghei and P.falciparum. The interaction is involved in the invasion of the mosquito midgut by P.berghei ookinete, but is dispensable for P.falciparum ookinete invasion. The polypeptide is Enolase-binding protein (Anopheles gambiae (African malaria mosquito)).